The following is a 365-amino-acid chain: Putative agmatine deiminase (365 aa).

The Amidino-cysteine intermediate role is filled by Cys356.

It belongs to the agmatine deiminase family.

The enzyme catalyses agmatine + H2O = N-carbamoylputrescine + NH4(+). This chain is Putative agmatine deiminase, found in Latilactobacillus sakei subsp. sakei (strain 23K) (Lactobacillus sakei subsp. sakei).